The primary structure comprises 141 residues: ATP synthase epsilon chain, chloroplastic (141 aa).

The protein belongs to the ATPase epsilon chain family. F-type ATPases have 2 components, F(1) - the catalytic core - and F(0) - the membrane proton channel. F(1) has five subunits: alpha(3), beta(3), gamma(1), delta(1), epsilon(1). F(0) has four main subunits: a(1), b(1), b'(1) and c(10-14). The alpha and beta chains form an alternating ring which encloses part of the gamma chain. F(1) is attached to F(0) by a central stalk formed by the gamma and epsilon chains, while a peripheral stalk is formed by the delta, b and b' chains.

Its subcellular location is the plastid. It localises to the chloroplast thylakoid membrane. Functionally, f(1)F(0) ATP synthase produces ATP from ADP in the presence of a proton or sodium gradient. F-type ATPases consist of two structural domains, F(1) containing the extramembraneous catalytic core and F(0) containing the membrane proton channel, linked together by a central stalk and a peripheral stalk. During catalysis, ATP synthesis in the catalytic domain of F(1) is coupled via a rotary mechanism of the central stalk subunits to proton translocation. The protein is ATP synthase epsilon chain, chloroplastic of Chlamydomonas reinhardtii (Chlamydomonas smithii).